Consider the following 583-residue polypeptide: L-galactono-1,4-lactone dehydrogenase 1, mitochondrial (583 aa).

The transit peptide at 1 to 36 directs the protein to the mitochondrion; that stretch reads MRRLLLAGILRRASSSPSSHHHLHLVRALSASSPLP. Positions 37 to 78 are cleaved as a propeptide — removed in mature form; the sequence is ASDADLRKYAGYALLLLGCGAATYYSFPLPPDALHKKAVPFK. A helical transmembrane segment spans residues 45-61; it reads YAGYALLLLGCGAATYY. The region spanning 95–266 is the FAD-binding PCMH-type domain; the sequence is THEVHTRVLL…AEVTLQCVER (172 aa).

FAD is required as a cofactor.

It is found in the mitochondrion membrane. It carries out the reaction L-galactono-1,4-lactone + 4 Fe(III)-[cytochrome c] = L-dehydroascorbate + 4 Fe(II)-[cytochrome c] + 5 H(+). Its pathway is cofactor biosynthesis; L-ascorbate biosynthesis. Its function is as follows. Involved in the biosynthesis of ascorbic acid. In Oryza sativa subsp. japonica (Rice), this protein is L-galactono-1,4-lactone dehydrogenase 1, mitochondrial (GLDH1).